Reading from the N-terminus, the 287-residue chain is Lipoyl synthase (287 aa).

Positions 38, 43, 49, 64, 68, 71, and 277 each coordinate [4Fe-4S] cluster. The Radical SAM core domain occupies 50–266 (WSRGTATFLL…KTVAESLGLR (217 aa)).

Belongs to the radical SAM superfamily. Lipoyl synthase family. Requires [4Fe-4S] cluster as cofactor.

The protein resides in the cytoplasm. The enzyme catalyses [[Fe-S] cluster scaffold protein carrying a second [4Fe-4S](2+) cluster] + N(6)-octanoyl-L-lysyl-[protein] + 2 oxidized [2Fe-2S]-[ferredoxin] + 2 S-adenosyl-L-methionine + 4 H(+) = [[Fe-S] cluster scaffold protein] + N(6)-[(R)-dihydrolipoyl]-L-lysyl-[protein] + 4 Fe(3+) + 2 hydrogen sulfide + 2 5'-deoxyadenosine + 2 L-methionine + 2 reduced [2Fe-2S]-[ferredoxin]. Its pathway is protein modification; protein lipoylation via endogenous pathway; protein N(6)-(lipoyl)lysine from octanoyl-[acyl-carrier-protein]: step 2/2. Functionally, catalyzes the radical-mediated insertion of two sulfur atoms into the C-6 and C-8 positions of the octanoyl moiety bound to the lipoyl domains of lipoate-dependent enzymes, thereby converting the octanoylated domains into lipoylated derivatives. This Chlorobium phaeobacteroides (strain DSM 266 / SMG 266 / 2430) protein is Lipoyl synthase.